Consider the following 227-residue polypeptide: Small ribosomal subunit protein uS3 (227 aa).

Residues Val-39–Arg-107 form the KH type-2 domain.

This sequence belongs to the universal ribosomal protein uS3 family. In terms of assembly, part of the 30S ribosomal subunit. Forms a tight complex with proteins S10 and S14.

Binds the lower part of the 30S subunit head. Binds mRNA in the 70S ribosome, positioning it for translation. This Marinobacter nauticus (strain ATCC 700491 / DSM 11845 / VT8) (Marinobacter aquaeolei) protein is Small ribosomal subunit protein uS3.